The following is a 348-amino-acid chain: Protein RecA (348 aa).

Residue 65–72 participates in ATP binding; the sequence is GPESSGKT.

The protein belongs to the RecA family.

The protein resides in the cytoplasm. Its function is as follows. Can catalyze the hydrolysis of ATP in the presence of single-stranded DNA, the ATP-dependent uptake of single-stranded DNA by duplex DNA, and the ATP-dependent hybridization of homologous single-stranded DNAs. It interacts with LexA causing its activation and leading to its autocatalytic cleavage. The sequence is that of Protein RecA from Alteromonas mediterranea (strain DSM 17117 / CIP 110805 / LMG 28347 / Deep ecotype).